A 78-amino-acid chain; its full sequence is RNA-binding protein Hfq (78 aa).

The 60-residue stretch at 10 to 69 folds into the Sm domain; that stretch reads DPFLNTLRKEHVPVSIYLVNGIKLQGQIESFDQYVVLLRNTVTQMVYKHAISTVVPARAV.

It belongs to the Hfq family. As to quaternary structure, homohexamer.

In terms of biological role, RNA chaperone that binds small regulatory RNA (sRNAs) and mRNAs to facilitate mRNA translational regulation in response to envelope stress, environmental stress and changes in metabolite concentrations. Also binds with high specificity to tRNAs. The chain is RNA-binding protein Hfq from Bordetella avium (strain 197N).